The sequence spans 386 residues: Diaminopimelate decarboxylase (386 aa).

An N6-(pyridoxal phosphate)lysine modification is found at lysine 49. Pyridoxal 5'-phosphate is bound by residues glycine 228 and 266–269 (ELGR). The substrate site is built by arginine 269, arginine 305, tyrosine 309, glutamate 335, and tyrosine 363. Tyrosine 363 contacts pyridoxal 5'-phosphate.

It belongs to the Orn/Lys/Arg decarboxylase class-II family. LysA subfamily. As to quaternary structure, homodimer. Requires pyridoxal 5'-phosphate as cofactor.

It carries out the reaction meso-2,6-diaminopimelate + H(+) = L-lysine + CO2. It participates in amino-acid biosynthesis; L-lysine biosynthesis via DAP pathway; L-lysine from DL-2,6-diaminopimelate: step 1/1. Its function is as follows. Specifically catalyzes the decarboxylation of meso-diaminopimelate (meso-DAP) to L-lysine. In Bacteroides thetaiotaomicron (strain ATCC 29148 / DSM 2079 / JCM 5827 / CCUG 10774 / NCTC 10582 / VPI-5482 / E50), this protein is Diaminopimelate decarboxylase.